The sequence spans 1432 residues: Superkiller protein 3 (1432 aa).

TPR repeat units lie at residues 4 to 37 (IKQLLKEAKQELTNRDYEETIEISEKVLKLDPDN) and 47 to 80 (ALSSLPASNNVSSNRNLERATNHYVSAAKLVPDN). Positions 339–397 (SANKPPEGHKKTEKETDIKDVDETNEDEVKDRVEDEVKDRVEDEVKDQDEEAKEDEEED) are disordered. The span at 344–381 (PEGHKKTEKETDIKDVDETNEDEVKDRVEDEVKDRVED) shows a compositional bias: basic and acidic residues. Residues 382-397 (EVKDQDEEAKEDEEED) show a composition bias toward acidic residues. TPR repeat units lie at residues 425–458 (ILAHRILCQYYLLTKEYEAALPYIKNGISLIAYN), 471–507 (REFSLDLATVYTYVDAPKDHNAALKLYDNILSGDFSN), 508–541 (IQAKMGKGIIFIERKNWKDAMTLLTQVHEQSPNN), 627–661 (APGFSTLGDIYCHYYKDHLRAFKCYFKAFDLDAGD), 702–735 (NWPFRVVGIAHLEKQEESDSIEWFQSALRVDPND), 736–769 (VESWVGLGQAYHACGRIEASIKVFDKAIQLRPSH), 945–985 (ASYW…QSNT), 987–1018 (ETWIGLGIATMDINFRVSQHCFIKATALEPKA), and 1226–1259 (ISNHICLGLSYFFLNDFDQTLNQFQELLSISKDS).

It belongs to the SKI3 family. As to quaternary structure, component of the SKI complex composed of at least SKI2, SKI3 and SKI8. The SKI complex interacts with SKI7, which makes the link between the SKI complex and the exosome in order to perform mRNA degradation.

The protein resides in the cytoplasm. It is found in the nucleus. Its function is as follows. Component of the SKI complex involved in 3'-mRNA degradation pathway. Represses dsRNA virus propagation by specifically blocking translation of viral mRNAs, perhaps recognizing the absence of CAP or poly(A). Essential for cell growth only in the presence of M1 replicon. The protein is Superkiller protein 3 (SKI3) of Saccharomyces cerevisiae (strain ATCC 204508 / S288c) (Baker's yeast).